We begin with the raw amino-acid sequence, 384 residues long: Iron(3+)-hydroxamate import system permease protein FhuB (384 aa).

9 helical membrane-spanning segments follow: residues 58–78 (GAVIVLIAGLCLLCLGAFLSI), 115–135 (TAAAALVGALLAVSGAIMQGM), 154–174 (FAVSIAFAFFPGLSAMGLVLW), 176–196 (FAGAGLGASTVMGIGMFSRGG), 202–222 (LALAGTAVTYFFTGISTAIAI), 243–263 (WSGVQLLLIAGAVGLTLAFFI), 296–316 (VILTGAAVSIAGTIAFIGLII), 330–350 (WIIPCSAVLGAVLLVFADIAA), and 357–377 (FETPVGALTSLIGVPFFFYLA).

This sequence belongs to the binding-protein-dependent transport system permease family. FecCD subfamily. The complex is composed of an ATP-binding protein (FhuC), two transmembrane proteins (FhuB and FhuG) and a solute-binding protein (FhuD or YxeB).

The protein localises to the cell membrane. The protein resides in the membrane raft. Part of the ABC transporter complex FhuBGCD involved in iron(3+)-hydroxamate import. Responsible for the translocation of the substrate across the membrane. The chain is Iron(3+)-hydroxamate import system permease protein FhuB (fhuB) from Bacillus subtilis (strain 168).